A 1321-amino-acid polypeptide reads, in one-letter code: Multidrug resistance protein pgp-1 (1321 aa).

The Cytoplasmic segment spans residues 1 to 77 (MLRNGSLRQS…YTTTLEKLLL (77 aa)). An ABC transmembrane type-1 1 domain is found at 77 to 381 (LFIGTLVAVI…AGPQLAVLGT (305 aa)). A helical transmembrane segment spans residues 78–98 (FIGTLVAVITGAGLPLMSILQ). Residues Asn115 and Asn125 are each glycosylated (N-linked (GlcNAc...) asparagine). Residues 144–164 (AMTVGMWAAGQITVTCYLYVA) form a helical membrane-spanning segment. A glycan (N-linked (GlcNAc...) asparagine) is linked at Asn190. Transmembrane regions (helical) follow at residues 213-233 (KIGM…VAFT), 240-260 (LVML…AKSM), 321-341 (ISFG…FYIG), and 350-370 (LNFG…MALG). The Cytoplasmic segment spans residues 371 to 753 (LAGPQLAVLG…LYHARPHALS (383 aa)). The ABC transporter 1 domain maps to 416 to 652 (ITVENVHFTY…QGLYYDLVTA (237 aa)). 451–458 (GSSGCGKS) contributes to the ATP binding site. 2 helical membrane-spanning segments follow: residues 754–774 (LFIG…YSVF) and 798–818 (LMFL…TFFM). The ABC transmembrane type-1 2 domain occupies 754–1043 (LFIGMSTATI…ATSYFPEYAK (290 aa)). N-linked (GlcNAc...) asparagine glycosylation is present at Asn850. 4 helical membrane-spanning segments follow: residues 874 to 894 (FSTV…AFFY), 895 to 915 (GWQM…GQYL), 978 to 998 (IQGL…TCAY), and 1017 to 1037 (VLRV…ATSY). At 1038–1321 (FPEYAKATFA…LTQKQMTEKK (284 aa)) the chain is on the cytoplasmic side. An ABC transporter 2 domain is found at 1077–1315 (VIFKNVRFAY…KGAYYKLTQK (239 aa)). 1112-1119 (GPSGCGKS) is an ATP binding site.

This sequence belongs to the ABC transporter superfamily. ABCB family. Multidrug resistance exporter (TC 3.A.1.201) subfamily. Intestinal cells.

Its subcellular location is the membrane. It carries out the reaction ATP + H2O + xenobioticSide 1 = ADP + phosphate + xenobioticSide 2.. Its function is as follows. Energy-dependent efflux pump responsible for decreased drug accumulation in multidrug-resistant cells. The chain is Multidrug resistance protein pgp-1 (pgp-1) from Caenorhabditis elegans.